A 37-amino-acid polypeptide reads, in one-letter code: Antifungal protein 4 (37 aa).

The protein localises to the secreted. In terms of biological role, possesses antifungal activity against P.infestans but not F.graminearum. In Malva parviflora (Little mallow), this protein is Antifungal protein 4.